We begin with the raw amino-acid sequence, 240 residues long: Poxin (240 aa).

H46 functions as the Proton donor in the catalytic mechanism. Y181 serves as the catalytic Shared with catalytic histidine of dimeric partner. K185 serves as the catalytic Proton acceptor; shared with catalytic histidine of dimeric partner.

Belongs to the poxin family. In terms of assembly, homodimer.

The catalysed reaction is 2',3'-cGAMP + H2O = Gp(2'-5')Ap(3') + H(+). Functionally, nuclease that cleaves host 2',3'-cGAMP. The chain is Poxin (p26) from Bombyx mori (Silk moth).